Consider the following 416-residue polypeptide: Signal recognition particle receptor FtsY (416 aa).

The span at 1 to 10 (MFSFFRRKKK) shows a compositional bias: basic residues. Positions 1–24 (MFSFFRRKKKQETPALEEAQVQET) are disordered. GTP-binding positions include 224–231 (GINGAGKT), 304–308 (DTAGR), and 368–371 (TKLD).

It belongs to the GTP-binding SRP family. FtsY subfamily. As to quaternary structure, part of the signal recognition particle protein translocation system, which is composed of SRP and FtsY. SRP is a ribonucleoprotein composed of Ffh and a 4.5S RNA molecule. Mg(2+) serves as cofactor.

The protein localises to the cell membrane. It is found in the cytoplasm. It carries out the reaction GTP + H2O = GDP + phosphate + H(+). Involved in targeting and insertion of nascent membrane proteins into the cytoplasmic membrane. Acts as a receptor for the complex formed by the signal recognition particle (SRP) and the ribosome-nascent chain (RNC). Interaction with SRP-RNC leads to the transfer of the RNC complex to the Sec translocase for insertion into the membrane, the hydrolysis of GTP by both Ffh and FtsY, and the dissociation of the SRP-FtsY complex into the individual components. This is Signal recognition particle receptor FtsY from Neisseria gonorrhoeae.